A 225-amino-acid chain; its full sequence is NAD(P)H-quinone oxidoreductase subunit K, chloroplastic (225 aa).

The [4Fe-4S] cluster site is built by cysteine 43, cysteine 44, cysteine 108, and cysteine 139.

The protein belongs to the complex I 20 kDa subunit family. As to quaternary structure, NDH is composed of at least 16 different subunits, 5 of which are encoded in the nucleus. It depends on [4Fe-4S] cluster as a cofactor.

Its subcellular location is the plastid. The protein resides in the chloroplast thylakoid membrane. The catalysed reaction is a plastoquinone + NADH + (n+1) H(+)(in) = a plastoquinol + NAD(+) + n H(+)(out). It catalyses the reaction a plastoquinone + NADPH + (n+1) H(+)(in) = a plastoquinol + NADP(+) + n H(+)(out). Its function is as follows. NDH shuttles electrons from NAD(P)H:plastoquinone, via FMN and iron-sulfur (Fe-S) centers, to quinones in the photosynthetic chain and possibly in a chloroplast respiratory chain. The immediate electron acceptor for the enzyme in this species is believed to be plastoquinone. Couples the redox reaction to proton translocation, and thus conserves the redox energy in a proton gradient. This Lobularia maritima (Sweet alyssum) protein is NAD(P)H-quinone oxidoreductase subunit K, chloroplastic.